A 341-amino-acid chain; its full sequence is L-threonine 3-dehydrogenase (341 aa).

C38 contacts Zn(2+). Catalysis depends on charge relay system residues T40 and H43. Zn(2+) contacts are provided by H63, E64, C93, C96, C99, and C107. Residues I175, D195, R200, 262–264, and 286–287 each bind NAD(+); these read LGI and IY.

The protein belongs to the zinc-containing alcohol dehydrogenase family. As to quaternary structure, homotetramer. It depends on Zn(2+) as a cofactor.

The protein resides in the cytoplasm. It carries out the reaction L-threonine + NAD(+) = (2S)-2-amino-3-oxobutanoate + NADH + H(+). Its pathway is amino-acid degradation; L-threonine degradation via oxydo-reductase pathway; glycine from L-threonine: step 1/2. In terms of biological role, catalyzes the NAD(+)-dependent oxidation of L-threonine to 2-amino-3-ketobutyrate. The chain is L-threonine 3-dehydrogenase from Alteromonas mediterranea (strain DSM 17117 / CIP 110805 / LMG 28347 / Deep ecotype).